The following is a 154-amino-acid chain: Superoxide dismutase [Cu-Zn] (154 aa).

Cu cation-binding residues include His-47, His-49, and His-64. A disulfide bridge connects residues Cys-58 and Cys-147. Positions 64, 72, 81, and 84 each coordinate Zn(2+). Residue His-121 participates in Cu cation binding. Over residues 126-137 (DLGRGGNEESKK) the composition is skewed to basic and acidic residues. The disordered stretch occupies residues 126–147 (DLGRGGNEESKKTGNAGPRPAC).

It belongs to the Cu-Zn superoxide dismutase family. In terms of assembly, homodimer. Cu cation serves as cofactor. It depends on Zn(2+) as a cofactor.

It localises to the cytoplasm. It carries out the reaction 2 superoxide + 2 H(+) = H2O2 + O2. Functionally, destroys radicals which are normally produced within the cells and which are toxic to biological systems. Plays an important role in the phase transition, and may be important in vivo, as it would facilitate the intracellular survival of the fungus by providing a non-toxic environment in the macrophage phagolysosomes. This is Superoxide dismutase [Cu-Zn] from Talaromyces marneffei (Penicillium marneffei).